The primary structure comprises 378 residues: Leukocyte elastase inhibitor (378 aa).

Residue Met1 is modified to N-acetylmethionine. At Lys137 the chain carries N6-acetyllysine. Ser299 is modified (phosphoserine). Residues 350-378 (DFIADHPFIFFIRHNPSSNILFLGRLSSP) are CARD-binding motif (CBM).

It belongs to the serpin family. Ov-serpin subfamily. Monomer. Interacts (via C-terminus) with CASP1; CASP4 (via CARD domain) and CASP5; these interactions regulate the activity of inflammatory caspases. Interacts with PRTN3. Interacts with GZMH.

Its subcellular location is the secreted. It is found in the cytoplasm. The protein localises to the cytolytic granule. It localises to the early endosome. In terms of biological role, neutrophil serine protease inhibitor that plays an essential role in the regulation of the innate immune response, inflammation and cellular homeostasis. Acts primarily to protect the cell from proteases released in the cytoplasm during stress or infection. These proteases are important in killing microbes but when released from granules, these potent enzymes also destroy host proteins and contribute to mortality. Regulates the activity of the neutrophil proteases elastase, cathepsin G, proteinase-3, chymase, chymotrypsin, and kallikrein-3. Also acts as a potent intracellular inhibitor of GZMH by directly blocking its proteolytic activity. During inflammation, limits the activity of inflammatory caspases CASP1, CASP4 and CASP5 by suppressing their caspase-recruitment domain (CARD) oligomerization and enzymatic activation. When secreted, promotes the proliferation of beta-cells via its protease inhibitory function. May be cleaved leading to a loss of its anti-protease activity and to the appearance of an endonuclease activity. However no catalytic site was identified. This chain is Leukocyte elastase inhibitor (SERPINB1), found in Sus scrofa (Pig).